The following is a 159-amino-acid chain: S-ribosylhomocysteine lyase 1 (159 aa).

3 residues coordinate Fe cation: His-54, His-58, and Cys-124.

It belongs to the LuxS family. Homodimer. Requires Fe cation as cofactor.

It carries out the reaction S-(5-deoxy-D-ribos-5-yl)-L-homocysteine = (S)-4,5-dihydroxypentane-2,3-dione + L-homocysteine. Functionally, involved in the synthesis of autoinducer 2 (AI-2) which is secreted by bacteria and is used to communicate both the cell density and the metabolic potential of the environment. The regulation of gene expression in response to changes in cell density is called quorum sensing. Catalyzes the transformation of S-ribosylhomocysteine (RHC) to homocysteine (HC) and 4,5-dihydroxy-2,3-pentadione (DPD). The polypeptide is S-ribosylhomocysteine lyase 1 (Lactobacillus delbrueckii subsp. bulgaricus (strain ATCC BAA-365 / Lb-18)).